The following is a 263-amino-acid chain: Probable adenylate kinase 7, mitochondrial (263 aa).

A mitochondrion-targeting transit peptide spans 1 to 30; it reads MAWLSRVRGVSPVTRLAAIRRSFGSAAALE. Position 72–77 (72–77) interacts with ATP; the sequence is GAWRHV. An NMP region spans residues 92 to 121; the sequence is SMGSLVRQELNPRSSLYKEIASAVNERKLV. Residues arginine 98, 119–121, 149–152, glutamine 156, and arginine 206 contribute to the AMP site; these read KLV and GIPR. Glycine 234 serves as a coordination point for ATP.

The protein belongs to the adenylate kinase family. Monomer.

It is found in the mitochondrion. It catalyses the reaction AMP + ATP = 2 ADP. Functionally, catalyzes the reversible transfer of the terminal phosphate group between ATP and AMP. Plays an important role in cellular energy homeostasis and in adenine nucleotide metabolism. The polypeptide is Probable adenylate kinase 7, mitochondrial (Arabidopsis thaliana (Mouse-ear cress)).